Here is a 73-residue protein sequence, read N- to C-terminus: Large ribosomal subunit protein bL31 (73 aa).

Belongs to the bacterial ribosomal protein bL31 family. Type A subfamily. In terms of assembly, part of the 50S ribosomal subunit.

Functionally, binds the 23S rRNA. The polypeptide is Large ribosomal subunit protein bL31 (Rhodospirillum centenum (strain ATCC 51521 / SW)).